The sequence spans 628 residues: Ribosome assembly protein RSM22, mitochondrial (628 aa).

The N-terminal 15 residues, 1 to 15, are a transit peptide targeting the mitochondrion; that stretch reads MMKRCFSILPQNVRF. Cys373, Cys379, Cys400, and Cys513 together coordinate [4Fe-4S] cluster.

The protein belongs to the methyltransferase superfamily. Rsm22 family. Associates with the mitochondrial ribosome (mitoribosome). Only transiently interacts with the mitoribosome.

It is found in the mitochondrion. Functionally, mitochondrial ribosome (mitoribosome) assembly factor. Binds at the interface of the head and body domains of the mitochondrial small ribosomal subunit (mt-SSU), occluding the mRNA channel and preventing compaction of the head domain towards the body. Probable inactive methyltransferase: retains the characteristic folding and ability to bind S-adenosyl-L-methionine, but it probably lost its methyltransferase activity. The chain is Ribosome assembly protein RSM22, mitochondrial (RSM22) from Saccharomyces cerevisiae (strain ATCC 204508 / S288c) (Baker's yeast).